The chain runs to 349 residues: Protein-glutamate methylesterase/protein-glutamine glutaminase (349 aa).

The Response regulatory domain maps to 2–118 (RVLVVDDSAL…VDLSSVAQEL (117 aa)). Asp-52 is modified (4-aspartylphosphate). One can recognise a CheB-type methylesterase domain in the interval 159-345 (VLIGSSTGGP…EEIVRFLEVK (187 aa)). Residues Ser-164, His-191, and Asp-287 contribute to the active site.

This sequence belongs to the CheB family. In terms of processing, phosphorylated by CheA. Phosphorylation of the N-terminal regulatory domain activates the methylesterase activity.

The protein localises to the cytoplasm. The enzyme catalyses [protein]-L-glutamate 5-O-methyl ester + H2O = L-glutamyl-[protein] + methanol + H(+). It catalyses the reaction L-glutaminyl-[protein] + H2O = L-glutamyl-[protein] + NH4(+). Involved in chemotaxis. Part of a chemotaxis signal transduction system that modulates chemotaxis in response to various stimuli. Catalyzes the demethylation of specific methylglutamate residues introduced into the chemoreceptors (methyl-accepting chemotaxis proteins or MCP) by CheR. Also mediates the irreversible deamidation of specific glutamine residues to glutamic acid. The sequence is that of Protein-glutamate methylesterase/protein-glutamine glutaminase from Archaeoglobus fulgidus (strain ATCC 49558 / DSM 4304 / JCM 9628 / NBRC 100126 / VC-16).